The following is a 424-amino-acid chain: Tubulin-specific chaperone cofactor E-like protein (424 aa).

Ser18 and Ser41 each carry phosphoserine. LRR repeat units lie at residues 73–98 (CAHV…IVSN), 99–123 (VPQL…TCAG), 124–147 (SFSG…HMIL), 150–172 (LPDL…PSIC), 173–197 (CHSL…KLGV), 199–224 (FPSL…SLAR), and 226–250 (FPNL…KLNS). The LRRCT domain maps to 262–303 (IPLLQPYTTEERRKLVIARLPSVSKLNGSVVTDGEREDSERF). Residues 334–424 (AEVDLRPQSS…DKIYVESKTK (91 aa)) form the Ubiquitin-like domain. Residues 349–375 (HFNDQVEEMSIRLDQTVAELKKQLKTL) are a coiled coil.

As to expression, abundantly expressed in testis, but is also present in several tissues at a much lower level.

Its subcellular location is the cytoplasm. The protein resides in the cytoskeleton. In terms of biological role, acts as a regulator of tubulin stability. This Homo sapiens (Human) protein is Tubulin-specific chaperone cofactor E-like protein (TBCEL).